The following is a 2130-amino-acid chain: Highly reducing polyketide synthase anuA (2130 aa).

In terms of domain architecture, Ketosynthase family 3 (KS3) spans 1-213 (MKAGVLSGTS…GANCHVILEQ (213 aa)). Residues 317–644 (FVFTGQGSQW…SFAGNLWLKG (328 aa)) enclose the Malonyl-CoA:ACP transacylase (MAT) domain. The tract at residues 701–836 (HELLGSLLTG…GSIAIHPRNA (136 aa)) is N-terminal hotdog fold. The PKS/mFAS DH domain maps to 701-1000 (HELLGSLLTG…LSPYQSTSQA (300 aa)). Residue His733 is the Proton acceptor; for dehydratase activity of the active site. Positions 849–1000 (LESTAKRTWY…LSPYQSTSQA (152 aa)) are C-terminal hotdog fold. The active-site Proton donor; for dehydratase activity is Asp914. An Enoyl reductase (ER) domain is found at 1405-1722 (GQLDTIYFQQ…SRSRIGKVAI (318 aa)). Positions 1747–1927 (SYVMVGCLGG…AVAVGLGMIS (181 aa)) constitute a Ketoreductase (KR) domain. In terms of domain architecture, Carrier spans 2047–2125 (TLDEAVLDHI…SLRDLAMTSL (79 aa)). Ser2084 carries the post-translational modification O-(pantetheine 4'-phosphoryl)serine.

Pantetheine 4'-phosphate serves as cofactor.

It participates in secondary metabolite biosynthesis. In terms of biological role, highly reducing polyketide synthase; part of the gene cluster that mediates the biosynthesis of annullatin D, an alkylated aromatic polyketide with a fused dihydrobenzofuran lactone ring system that exhibits potent agonistic activities toward the cannabinoid receptors. The annullatin backbone 2-hydroxymethyl-3-pentylphenol is assembled from one acetyl-CoA starter unit and 5 malonyl-CoA elongation units by cooperation of the highly reducing polyketide synthase anuA, the short-chain dehydrogenase anuB and the oxidoreductase anuC, before being hydroxylated at the C-5 alkyl chain by the cytochrome P450 monooxygenase anuE to form (8S)-annullatin E. The prenyltransferase anuH subsequently installs one isoprenyl group at the benzene ring to form (8S)-annullatin J. Enzymatic or nonenzymatic dihydro-benzofuran ring formation between the prenyl and the phenolic hydroxyl groups in (8S)-annullatin J results in two diastereomers (2S,9S)-annullatin H and compound 12. The intermediate (2S,9S)-annullatin H is then converted to (2S,9S)-annullatin D by the FAD-linked oxidoreductase anuG-catalyzed five-member lactone ring formation. The isomer 12 acts as a substrate for the short-chain dehydrogenase anuF and is oxidized to (2R)-annullatin F, which is subsequently acetylated by an acetyltransferase leading to (2R)-annullatin G formation. The remaining enzymes identified within the cluster, anuD, anuI and anuJ, seem not to be involved in annullatin biosynthesis. The chain is Highly reducing polyketide synthase anuA from Penicillium roqueforti (strain FM164).